A 963-amino-acid chain; its full sequence is Integrator complex subunit 4 (963 aa).

Position 26 is an N6-acetyllysine (K26). HEAT repeat units follow at residues 66-105 (AESV…TAGF), 145-183 (QAIQ…LEKS), 190-228 (GLAA…RGLK), 229-263 (LHQT…SQLY), 277-313 (IRLV…EQVS), 369-405 (NLIE…AQSS), 406-444 (PSFA…NITL), and 446-484 (EDQL…GIHL). K791 participates in a covalent cross-link: Glycyl lysine isopeptide (Lys-Gly) (interchain with G-Cter in SUMO1); alternate. Residue K791 forms a Glycyl lysine isopeptide (Lys-Gly) (interchain with G-Cter in SUMO2); alternate linkage.

This sequence belongs to the Integrator subunit 4 family. In terms of assembly, component of the Integrator complex, composed of core subunits INTS1, INTS2, INTS3, INTS4, INTS5, INTS6, INTS7, INTS8, INTS9/RC74, INTS10, INTS11/CPSF3L, INTS12, INTS13, INTS14 and INTS15. The core complex associates with protein phosphatase 2A subunits PPP2CA and PPP2R1A, to form the Integrator-PP2A (INTAC) complex. INTS4 is part of the RNA endonuclease subcomplex, composed of INTS4, INTS9, INTS11 and inositol hexakisphosphate (InsP6). Interacts with BRAT1; interaction is required for the assembly of the RNA endonuclease subcomplex.

It is found in the nucleus. Its subcellular location is the cytoplasm. Its function is as follows. Component of the integrator complex, a multiprotein complex that terminates RNA polymerase II (Pol II) transcription in the promoter-proximal region of genes. The integrator complex provides a quality checkpoint during transcription elongation by driving premature transcription termination of transcripts that are unfavorably configured for transcriptional elongation: the complex terminates transcription by (1) catalyzing dephosphorylation of the C-terminal domain (CTD) of Pol II subunit POLR2A/RPB1 and SUPT5H/SPT5, (2) degrading the exiting nascent RNA transcript via endonuclease activity and (3) promoting the release of Pol II from bound DNA. The integrator complex is also involved in terminating the synthesis of non-coding Pol II transcripts, such as enhancer RNAs (eRNAs), small nuclear RNAs (snRNAs), telomerase RNAs and long non-coding RNAs (lncRNAs). Within the integrator complex, INTS4 acts as an scaffold that links INTS9 and INTS11. Mediates recruitment of cytoplasmic dynein to the nuclear envelope, probably as component of the integrator complex. The protein is Integrator complex subunit 4 of Homo sapiens (Human).